Reading from the N-terminus, the 1217-residue chain is Sterol 3-beta-glucosyltransferase (1217 aa).

The GRAM 1 domain occupies 195 to 232 (EFVRKYFGISEEETLIGHYTGWLLQEVLIQGNLFITNS). A PH domain is found at 246 to 343 (AVVLCGKLKL…WVKCLKKQLF (98 aa)). A GRAM 2 domain is found at 590-656 (AKIKDWFNLH…EDIEGYNEIL (67 aa)). UDP-alpha-D-glucose is bound by residues Ser-766, Arg-767, Asp-769, Asn-1042, Ile-1072, His-1074, His-1087, Ser-1090, Gly-1091, Thr-1092, Asp-1111, and Gln-1112.

It belongs to the glycosyltransferase 28 family.

The protein resides in the cytoplasm. It is found in the membrane. The catalysed reaction is a sterol + UDP-alpha-D-glucose = a sterol 3-beta-D-glucoside + UDP + H(+). It carries out the reaction ergosterol + UDP-alpha-D-glucose = ergosteryl 3-beta-D-glucoside + UDP + H(+). In terms of biological role, sterol glycosyltransferase responsible for the glycosylation of ergosterol to form ergosterol-glucoside. The polypeptide is Sterol 3-beta-glucosyltransferase (Vanderwaltozyma polyspora (strain ATCC 22028 / DSM 70294 / BCRC 21397 / CBS 2163 / NBRC 10782 / NRRL Y-8283 / UCD 57-17) (Kluyveromyces polysporus)).